The sequence spans 83 residues: Mu-theraphotoxin-Hhn2e (83 aa).

Positions 1-21 are cleaved as a signal peptide; it reads MKASMFLALAGLVLLFVVGYA. Residues 22–48 constitute a propeptide that is removed on maturation; the sequence is SESEEKEFPRELLSKIFAVDDFKGEER. Intrachain disulfides connect cysteine 50-cysteine 65, cysteine 57-cysteine 70, and cysteine 64-cysteine 77. Leucine 81 is subject to Leucine amide.

Belongs to the neurotoxin 10 (Hwtx-1) family. 15 (Hntx-3) subfamily. Monomer. In terms of tissue distribution, expressed by the venom gland.

Its subcellular location is the secreted. Its function is as follows. Lethal neurotoxin. Selectively blocks tetrodotoxin-sensitive voltage-gated sodium channels (Nav). Does not affect tetrodotoxin-resistant voltage-gated sodium channels or calcium channels. The protein is Mu-theraphotoxin-Hhn2e of Cyriopagopus hainanus (Chinese bird spider).